A 339-amino-acid chain; its full sequence is Major pollen allergen Lol p 5b (339 aa).

Residues Met1 to Ala25 form the signal peptide. Repeat copies occupy residues Pro32–Thr34, Pro35–Thr37, Pro38–Ala40, Pro41–Thr43, Ala44–Thr46, Pro47–Thr49, Pro50–Thr52, Pro53–Thr55, and Pro56–Ala58. The segment at Pro32 to Ala58 is 9 X 3 AA tandem repeats of [PA]-A-[TA]. Residues Ala36 to Ala58 show a composition bias toward low complexity. The interval Ala36–Thr65 is disordered. One copy of the 2-1; truncated repeat lies at Ala285–Ala290. The interval Ala285–Ala334 is 6 X 9 AA approximate tandem repeats of T-A-T-A-T-P-A-A-A. 4 tandem repeats follow at residues Thr292–Ala300, Thr301–Ala309, Tyr310–Ala318, and Thr319–Ala327. One copy of the 2-6; truncated repeat lies at Thr328–Ala334.

The protein belongs to the Poa p IX/Phl p VI allergen family. In terms of tissue distribution, pollen, starch granules.

This Lolium perenne (Perennial ryegrass) protein is Major pollen allergen Lol p 5b.